The following is a 160-amino-acid chain: Cytochrome b6-f complex subunit 4 (160 aa).

3 helical membrane passes run 36-56 (LLYIFPVVILGTIACNVGLAI), 95-115 (LLGVLLMVSVPSGLLTVPFLE), and 131-151 (TVFLIGTVVALWLGIGATLPI).

Belongs to the cytochrome b family. PetD subfamily. As to quaternary structure, the 4 large subunits of the cytochrome b6-f complex are cytochrome b6, subunit IV (17 kDa polypeptide, petD), cytochrome f and the Rieske protein, while the 4 small subunits are petG, petL, petM and petN. The complex functions as a dimer.

It localises to the plastid. The protein localises to the chloroplast thylakoid membrane. In terms of biological role, component of the cytochrome b6-f complex, which mediates electron transfer between photosystem II (PSII) and photosystem I (PSI), cyclic electron flow around PSI, and state transitions. This is Cytochrome b6-f complex subunit 4 from Oenothera elata subsp. hookeri (Hooker's evening primrose).